The sequence spans 962 residues: Glycine dehydrogenase (decarboxylating) (962 aa).

K709 carries the N6-(pyridoxal phosphate)lysine modification.

The protein belongs to the GcvP family. In terms of assembly, the glycine cleavage system is composed of four proteins: P, T, L and H. Pyridoxal 5'-phosphate is required as a cofactor.

The enzyme catalyses N(6)-[(R)-lipoyl]-L-lysyl-[glycine-cleavage complex H protein] + glycine + H(+) = N(6)-[(R)-S(8)-aminomethyldihydrolipoyl]-L-lysyl-[glycine-cleavage complex H protein] + CO2. In terms of biological role, the glycine cleavage system catalyzes the degradation of glycine. The P protein binds the alpha-amino group of glycine through its pyridoxal phosphate cofactor; CO(2) is released and the remaining methylamine moiety is then transferred to the lipoamide cofactor of the H protein. The protein is Glycine dehydrogenase (decarboxylating) of Shewanella sediminis (strain HAW-EB3).